Here is a 131-residue protein sequence, read N- to C-terminus: Flagellar assembly factor FliW (131 aa).

Belongs to the FliW family. Interacts with translational regulator CsrA and flagellin(s).

The protein localises to the cytoplasm. Its function is as follows. Acts as an anti-CsrA protein, binds CsrA and prevents it from repressing translation of its target genes, one of which is flagellin. Binds to flagellin and participates in the assembly of the flagellum. The protein is Flagellar assembly factor FliW of Campylobacter lari (strain RM2100 / D67 / ATCC BAA-1060).